Reading from the N-terminus, the 247-residue chain is Transmembrane protein 33 (247 aa).

Position 2 is an N-acetylalanine (alanine 2). The Lumenal portion of the chain corresponds to 2 to 31; it reads ADTTPNGPQGAGAVQFMMTNKLDTAMWLSR. The helical transmembrane segment at 32-52 threads the bilayer; that stretch reads LFTVYCSALFVLPLLGLHEAA. The Cytoplasmic segment spans residues 53-100; that stretch reads SFYQRALLANALTSALRLHQRLPHFQLSRAFLAQALLEDSCHYLLYSL. Residues 101 to 121 traverse the membrane as a helical segment; the sequence is IFVNSYPVTMSIFPVLLFSLL. Residues 122–155 are Lumenal-facing; it reads HAATYTKKVLDAKGSNSLPLLRSFLDKLSTNQQN. A helical transmembrane segment spans residues 156-176; sequence ILKFIACNEIFLMPATVFMLF. Topologically, residues 177-247 are cytoplasmic; sequence SGQGSLLQPF…FISRLAPTVA (71 aa).

Belongs to the PER33/POM33 family. Interacts with EIF2AK3. Interacts with RTN1, RTN2, RTN3, RTN4 and ARL6IP1. Interacts with RNF5. Interacts with RNF26. Interacts with PKD2.

The protein localises to the endoplasmic reticulum membrane. The protein resides in the melanosome. It localises to the nucleus envelope. Its function is as follows. Acts as a regulator of the tubular endoplasmic reticulum (ER) network by modulating intracellular calcium homeostasis. Mechanistically, stimulates PKD2 calcium-dependent activity. Suppresses the RTN3/4-induced formation of the ER tubules. Positively regulates PERK-mediated and IRE1-mediated unfolded protein response signaling. Plays an essential role in VEGF-mediated release of Ca(2+) from ER stores during angiogenesis. Also plays a role in the modulation of innate immune signaling through the cGAS-STING pathway by interacting with RNF26. Participates in lipid metabolism by acting as a downstream effector of the pyruvate kinase/PKM. Forms a complex with RNF5 to facilitate polyubiquitination and subsequent degradation of SCAP on the ER membrane. This chain is Transmembrane protein 33 (Tmem33), found in Mus musculus (Mouse).